Reading from the N-terminus, the 260-residue chain is Shikimate dehydrogenase (NADP(+)) (260 aa).

Shikimate is bound by residues 14-16 (SAS) and Thr60. The active-site Proton acceptor is the Lys64. The shikimate site is built by Asn85 and Asp100. Residues 121–125 (GAGGA), 145–150 (NRTYER), and Phe201 each bind NADP(+). Tyr203 contributes to the shikimate binding site. Residue Gly225 coordinates NADP(+).

This sequence belongs to the shikimate dehydrogenase family. Homodimer.

It catalyses the reaction shikimate + NADP(+) = 3-dehydroshikimate + NADPH + H(+). It participates in metabolic intermediate biosynthesis; chorismate biosynthesis; chorismate from D-erythrose 4-phosphate and phosphoenolpyruvate: step 4/7. Its function is as follows. Involved in the biosynthesis of the chorismate, which leads to the biosynthesis of aromatic amino acids. Catalyzes the reversible NADPH linked reduction of 3-dehydroshikimate (DHSA) to yield shikimate (SA). This chain is Shikimate dehydrogenase (NADP(+)), found in Pyrobaculum islandicum (strain DSM 4184 / JCM 9189 / GEO3).